The following is a 175-amino-acid chain: Thioredoxin-like protein CITRX, chloroplastic (175 aa).

The transit peptide at 1–64 directs the protein to the chloroplast; sequence MQAASLAFHP…KPPAVGKYVR (64 aa). The Thioredoxin domain occupies 74 to 175; the sequence is AKEIQELIKG…MMRDIIDNDL (102 aa). Active-site nucleophile residues include Cys-98 and Cys-101. Cys-98 and Cys-101 are joined by a disulfide.

The protein belongs to the thioredoxin family. Plant CITRX-type subfamily. In terms of assembly, interacts with Cf-9 resistance protein.

It is found in the plastid. The protein resides in the chloroplast. In terms of biological role, probable thiol-disulfide oxidoreductase that may play a role in proper chloroplast development. This chain is Thioredoxin-like protein CITRX, chloroplastic, found in Solanum lycopersicum (Tomato).